A 513-amino-acid polypeptide reads, in one-letter code: ATP synthase subunit alpha (513 aa).

169 to 176 is a binding site for ATP; that stretch reads GDRQTGKT.

It belongs to the ATPase alpha/beta chains family. F-type ATPases have 2 components, CF(1) - the catalytic core - and CF(0) - the membrane proton channel. CF(1) has five subunits: alpha(3), beta(3), gamma(1), delta(1), epsilon(1). CF(0) has three main subunits: a(1), b(2) and c(9-12). The alpha and beta chains form an alternating ring which encloses part of the gamma chain. CF(1) is attached to CF(0) by a central stalk formed by the gamma and epsilon chains, while a peripheral stalk is formed by the delta and b chains.

The protein localises to the cell inner membrane. It carries out the reaction ATP + H2O + 4 H(+)(in) = ADP + phosphate + 5 H(+)(out). Produces ATP from ADP in the presence of a proton gradient across the membrane. The alpha chain is a regulatory subunit. The polypeptide is ATP synthase subunit alpha (Cupriavidus metallidurans (strain ATCC 43123 / DSM 2839 / NBRC 102507 / CH34) (Ralstonia metallidurans)).